The following is a 256-amino-acid chain: Alcohol dehydrogenase (256 aa).

12 to 35 lines the NAD(+) pocket; it reads FVAGLGGIGLDTSKELVKRDLKNL. Substrate is bound at residue serine 140. Residue tyrosine 153 is the Proton acceptor of the active site.

The protein belongs to the short-chain dehydrogenases/reductases (SDR) family. In terms of assembly, homodimer.

It carries out the reaction a primary alcohol + NAD(+) = an aldehyde + NADH + H(+). The enzyme catalyses a secondary alcohol + NAD(+) = a ketone + NADH + H(+). In Drosophila yakuba (Fruit fly), this protein is Alcohol dehydrogenase (Adh).